The primary structure comprises 325 residues: MGGWAIAVHGGAGIDPNLPAERQEEAKQLLTRCLNLGIIALRSNVSAIDVVELVIRELETDPLFNSGRGSALTEKGTVEMEASIMDGTKRRCGAVSGITTVKNPISLARLVMDKSPHSYLAFSGAEDFARKQGVEIVDNEYFVTDDNVGMLKLAKEANSILFDYRIPPMGCAGAAATDSPIQMNGLPISIYAPETVGCVVVDGKGHCAAGTSTGGLMNKMMGRIGDSPLIGAGTYASEFCGVSCTGEGEAIIRATLARDVSAVMEYKGLNLQEAVDYVIKHRLDEGFAGLIAVSNKGEVVCGFNSNGMFRGCATEDGFMEVAIWE.

Thr-195 functions as the Nucleophile in the catalytic mechanism. Residues 223–226 and 245–248 each bind substrate; these read RIGD and TGEG.

Belongs to the Ntn-hydrolase family. As to quaternary structure, heterotetramer of two alpha and two beta chains arranged as a dimer of alpha/beta heterodimers. Cleaved into an alpha and beta chain by autocatalysis; this activates the enzyme. The N-terminal residue of the beta subunit is responsible for the nucleophile hydrolase activity.

It carries out the reaction Cleavage of a beta-linked Asp residue from the N-terminus of a polypeptide.. In terms of biological role, acts in asparagine catabolism and also in the final steps of protein degradation via hydrolysis of a range of isoaspartyl dipeptides. The protein is Probable isoaspartyl peptidase/L-asparaginase 2 of Arabidopsis thaliana (Mouse-ear cress).